The chain runs to 370 residues: Phosphoserine aminotransferase (370 aa).

Arg-42 is a binding site for L-glutamate. Trp-108, Thr-158, Asp-182, and Gln-205 together coordinate pyridoxal 5'-phosphate. N6-(pyridoxal phosphate)lysine is present on Lys-206. Residue 247 to 248 participates in pyridoxal 5'-phosphate binding; sequence NT.

Belongs to the class-V pyridoxal-phosphate-dependent aminotransferase family. SerC subfamily. As to quaternary structure, homodimer. Pyridoxal 5'-phosphate serves as cofactor.

Its subcellular location is the cytoplasm. The catalysed reaction is O-phospho-L-serine + 2-oxoglutarate = 3-phosphooxypyruvate + L-glutamate. It catalyses the reaction 4-(phosphooxy)-L-threonine + 2-oxoglutarate = (R)-3-hydroxy-2-oxo-4-phosphooxybutanoate + L-glutamate. The protein operates within amino-acid biosynthesis; L-serine biosynthesis; L-serine from 3-phospho-D-glycerate: step 2/3. Its pathway is cofactor biosynthesis; pyridoxine 5'-phosphate biosynthesis; pyridoxine 5'-phosphate from D-erythrose 4-phosphate: step 3/5. Catalyzes the reversible conversion of 3-phosphohydroxypyruvate to phosphoserine and of 3-hydroxy-2-oxo-4-phosphonooxybutanoate to phosphohydroxythreonine. The protein is Phosphoserine aminotransferase of Albidiferax ferrireducens (strain ATCC BAA-621 / DSM 15236 / T118) (Rhodoferax ferrireducens).